Here is a 133-residue protein sequence, read N- to C-terminus: NADPH-dependent 7-cyano-7-deazaguanine reductase (133 aa).

Cys-48 functions as the Thioimide intermediate in the catalytic mechanism. Asp-55 serves as the catalytic Proton donor. Substrate is bound by residues 70–72 (VEL) and 89–90 (QE).

The protein belongs to the GTP cyclohydrolase I family. QueF type 1 subfamily.

It localises to the cytoplasm. It carries out the reaction 7-aminomethyl-7-carbaguanine + 2 NADP(+) = 7-cyano-7-deazaguanine + 2 NADPH + 3 H(+). It participates in tRNA modification; tRNA-queuosine biosynthesis. Catalyzes the NADPH-dependent reduction of 7-cyano-7-deazaguanine (preQ0) to 7-aminomethyl-7-deazaguanine (preQ1). This chain is NADPH-dependent 7-cyano-7-deazaguanine reductase, found in Thermoanaerobacter pseudethanolicus (strain ATCC 33223 / 39E) (Clostridium thermohydrosulfuricum).